A 151-amino-acid polypeptide reads, in one-letter code: Neuroglobin (151 aa).

Residues 1-149 enclose the Globin domain; sequence MERPEPELIR…VVQAMSRGWD (149 aa). Residues His64 and His96 each contribute to the heme b site.

The protein belongs to the globin family. As to quaternary structure, monomer. Homodimer and homotetramer; disulfide-linked. Mainly monomeric but also detected as part of homodimers and homotetramers. Interacts with 14-3-3 proteins; regulates the phosphorylation of NGB. Could interact (ferrous form) with G-alpha(i) proteins (GTP-bound form). Phosphorylated during hypoxia by ERK1/ERK2. Phosphorylation regulates the heme pocket hexacoordination preventing the association of His-64 with the heme metal center. Thereby, promotes the access of dioxygen and nitrite to the heme and stimulates the nitrite reductase activity. Phosphorylation during hypoxia is stabilized by 14-3-3 proteins.

Its subcellular location is the cytoplasm. The protein localises to the cytosol. It is found in the mitochondrion matrix. The catalysed reaction is Fe(III)-heme b-[protein] + nitric oxide + H2O = Fe(II)-heme b-[protein] + nitrite + 2 H(+). Functionally, monomeric globin with a bis-histidyl six-coordinate heme-iron atom through which it can bind dioxygen, carbon monoxide and nitric oxide. Could help transport oxygen and increase its availability to the metabolically active neuronal tissues, though its low quantity in tissues as well as its high affinity for dioxygen, which may limit its oxygen-releasing ability, argue against it. The ferrous/deoxygenated form exhibits a nitrite reductase activity and it could produce nitric oxide which in turn inhibits cellular respiration in response to hypoxia. In its ferrous/deoxygenated state, it may also exhibit GDI (Guanine nucleotide Dissociation Inhibitor) activity toward heterotrimeric G-alpha proteins, thereby regulating signal transduction to facilitate neuroprotective responses in the wake of hypoxia and associated oxidative stress. The polypeptide is Neuroglobin (Macaca mulatta (Rhesus macaque)).